A 349-amino-acid polypeptide reads, in one-letter code: Dihydroorotase (349 aa).

Positions 17 and 19 each coordinate Zn(2+). Residues 19-21 and asparagine 45 each bind substrate; that span reads HLR. 3 residues coordinate Zn(2+): lysine 105, histidine 142, and histidine 180. Lysine 105 carries the N6-carboxylysine modification. Histidine 142 serves as a coordination point for substrate. Residue leucine 225 coordinates substrate. Aspartate 253 is a binding site for Zn(2+). Residue aspartate 253 is part of the active site. Residues histidine 257 and alanine 269 each coordinate substrate.

It belongs to the metallo-dependent hydrolases superfamily. DHOase family. Class II DHOase subfamily. In terms of assembly, homodimer. Requires Zn(2+) as cofactor.

The catalysed reaction is (S)-dihydroorotate + H2O = N-carbamoyl-L-aspartate + H(+). It functions in the pathway pyrimidine metabolism; UMP biosynthesis via de novo pathway; (S)-dihydroorotate from bicarbonate: step 3/3. In terms of biological role, catalyzes the reversible cyclization of carbamoyl aspartate to dihydroorotate. In Nitrosomonas europaea (strain ATCC 19718 / CIP 103999 / KCTC 2705 / NBRC 14298), this protein is Dihydroorotase.